Reading from the N-terminus, the 800-residue chain is DNA topoisomerase 1 (800 aa).

One can recognise a Toprim domain in the interval 1–111 (MKLVIVESPA…VKSDDFFKRV (111 aa)). 2 residues coordinate Mg(2+): E7 and D80. A Topo IA-type catalytic domain is found at 132 to 568 (DNNLVNAQQA…FWNGFNHNIE (437 aa)). The segment at 166–171 (SAGRVQ) is interaction with DNA. Y304 (O-(5'-phospho-DNA)-tyrosine intermediate) is an active-site residue. The C4-type zinc-finger motif lies at 600 to 627 (CPSCKTGELSLKLGKFGAFLACSNYPEC).

Belongs to the type IA topoisomerase family. Monomer. Mg(2+) serves as cofactor.

It catalyses the reaction ATP-independent breakage of single-stranded DNA, followed by passage and rejoining.. Functionally, releases the supercoiling and torsional tension of DNA, which is introduced during the DNA replication and transcription, by transiently cleaving and rejoining one strand of the DNA duplex. Introduces a single-strand break via transesterification at a target site in duplex DNA. The scissile phosphodiester is attacked by the catalytic tyrosine of the enzyme, resulting in the formation of a DNA-(5'-phosphotyrosyl)-enzyme intermediate and the expulsion of a 3'-OH DNA strand. The free DNA strand then undergoes passage around the unbroken strand, thus removing DNA supercoils. Finally, in the religation step, the DNA 3'-OH attacks the covalent intermediate to expel the active-site tyrosine and restore the DNA phosphodiester backbone. The chain is DNA topoisomerase 1 from Rickettsia bellii (strain RML369-C).